The primary structure comprises 66 residues: Large ribosomal subunit protein bL33c (66 aa).

It belongs to the bacterial ribosomal protein bL33 family.

It is found in the plastid. Its subcellular location is the chloroplast. In Calycanthus floridus var. glaucus (Eastern sweetshrub), this protein is Large ribosomal subunit protein bL33c.